The chain runs to 276 residues: Dermonecrotic toxin LvSicTox-alphaII1 (276 aa).

Residue His-5 is part of the active site. Positions 25 and 27 each coordinate Mg(2+). The active-site Nucleophile is His-41. 2 cysteine pairs are disulfide-bonded: Cys-45–Cys-51 and Cys-47–Cys-193. Asp-85 is a Mg(2+) binding site.

It belongs to the arthropod phospholipase D family. Class II subfamily. The cofactor is Mg(2+). Expressed by the venom gland.

The protein localises to the secreted. The enzyme catalyses an N-(acyl)-sphingosylphosphocholine = an N-(acyl)-sphingosyl-1,3-cyclic phosphate + choline. It carries out the reaction an N-(acyl)-sphingosylphosphoethanolamine = an N-(acyl)-sphingosyl-1,3-cyclic phosphate + ethanolamine. It catalyses the reaction a 1-acyl-sn-glycero-3-phosphocholine = a 1-acyl-sn-glycero-2,3-cyclic phosphate + choline. The catalysed reaction is a 1-acyl-sn-glycero-3-phosphoethanolamine = a 1-acyl-sn-glycero-2,3-cyclic phosphate + ethanolamine. Dermonecrotic toxins cleave the phosphodiester linkage between the phosphate and headgroup of certain phospholipids (sphingolipid and lysolipid substrates), forming an alcohol (often choline) and a cyclic phosphate. This toxin acts on sphingomyelin (SM). It may also act on ceramide phosphoethanolamine (CPE), lysophosphatidylcholine (LPC) and lysophosphatidylethanolamine (LPE), but not on lysophosphatidylserine (LPS), and lysophosphatidylglycerol (LPG). It acts by transphosphatidylation, releasing exclusively cyclic phosphate products as second products. Induces dermonecrosis, hemolysis, increased vascular permeability, edema, inflammatory response, and platelet aggregation. In Loxosceles variegata (Recluse spider), this protein is Dermonecrotic toxin LvSicTox-alphaII1.